The following is a 208-amino-acid chain: MTLIPIVVEQTSRGERAYDIYSRLVKERIIFVTGPIEDNMASVIVAQLLFLESENPDKDICMYINSPGGVVTAGLSIYDTMQYINPDVSTLCIGQAASMGSLLLAAGTKGKRYSLPHSRIMIHQPSGGYHGQATDIEIHANEILRVKKKLNQIYEKHTGNSLKKIEGMMERDKFMDPEEARKIGLIDRVIAERTDIEIENIKVKQKVG.

The Nucleophile role is filled by serine 98. Residue histidine 123 is part of the active site.

The protein belongs to the peptidase S14 family. In terms of assembly, fourteen ClpP subunits assemble into 2 heptameric rings which stack back to back to give a disk-like structure with a central cavity, resembling the structure of eukaryotic proteasomes.

It localises to the cytoplasm. The catalysed reaction is Hydrolysis of proteins to small peptides in the presence of ATP and magnesium. alpha-casein is the usual test substrate. In the absence of ATP, only oligopeptides shorter than five residues are hydrolyzed (such as succinyl-Leu-Tyr-|-NHMec, and Leu-Tyr-Leu-|-Tyr-Trp, in which cleavage of the -Tyr-|-Leu- and -Tyr-|-Trp bonds also occurs).. In terms of biological role, cleaves peptides in various proteins in a process that requires ATP hydrolysis. Has a chymotrypsin-like activity. Plays a major role in the degradation of misfolded proteins. The sequence is that of ATP-dependent Clp protease proteolytic subunit from Wolbachia sp. subsp. Drosophila simulans (strain wRi).